Consider the following 141-residue polypeptide: Large ribosomal subunit protein uL11 (141 aa).

The protein belongs to the universal ribosomal protein uL11 family. In terms of assembly, part of the ribosomal stalk of the 50S ribosomal subunit. Interacts with L10 and the large rRNA to form the base of the stalk. L10 forms an elongated spine to which L12 dimers bind in a sequential fashion forming a multimeric L10(L12)X complex. In terms of processing, one or more lysine residues are methylated.

Functionally, forms part of the ribosomal stalk which helps the ribosome interact with GTP-bound translation factors. The chain is Large ribosomal subunit protein uL11 from Campylobacter fetus subsp. fetus (strain 82-40).